Reading from the N-terminus, the 233-residue chain is LexA repressor (233 aa).

Positions 26–46 (FDEMKDALDLRSKSGIHRLIT) form a DNA-binding region, H-T-H motif. Residues S154 and K192 each act as for autocatalytic cleavage activity in the active site.

Belongs to the peptidase S24 family. Homodimer.

The catalysed reaction is Hydrolysis of Ala-|-Gly bond in repressor LexA.. Its function is as follows. Represses a number of genes involved in the response to DNA damage (SOS response), including recA and lexA. In the presence of single-stranded DNA, RecA interacts with LexA causing an autocatalytic cleavage which disrupts the DNA-binding part of LexA, leading to derepression of the SOS regulon and eventually DNA repair. The protein is LexA repressor of Nitrobacter hamburgensis (strain DSM 10229 / NCIMB 13809 / X14).